We begin with the raw amino-acid sequence, 269 residues long: Ribosomal RNA small subunit methyltransferase A (269 aa).

6 residues coordinate S-adenosyl-L-methionine: H11, L13, G38, E59, D84, and N105.

The protein belongs to the class I-like SAM-binding methyltransferase superfamily. rRNA adenine N(6)-methyltransferase family. RsmA subfamily.

Its subcellular location is the cytoplasm. The enzyme catalyses adenosine(1518)/adenosine(1519) in 16S rRNA + 4 S-adenosyl-L-methionine = N(6)-dimethyladenosine(1518)/N(6)-dimethyladenosine(1519) in 16S rRNA + 4 S-adenosyl-L-homocysteine + 4 H(+). Functionally, specifically dimethylates two adjacent adenosines (A1518 and A1519) in the loop of a conserved hairpin near the 3'-end of 16S rRNA in the 30S particle. May play a critical role in biogenesis of 30S subunits. The protein is Ribosomal RNA small subunit methyltransferase A of Acaryochloris marina (strain MBIC 11017).